Reading from the N-terminus, the 634-residue chain is Chaperone protein dnaK2 (634 aa).

Residue Thr-197 is modified to Phosphothreonine; by autocatalysis. Residues 592–634 are disordered; that stretch reads IGSSVYQQPGNQPPAPGTPDSNESNDKGGDDDVIDADFTETKD. The span at 622–634 shows a compositional bias: acidic residues; that stretch reads DDVIDADFTETKD.

This sequence belongs to the heat shock protein 70 family.

Functionally, acts as a chaperone. In Prochlorococcus marinus subsp. pastoris (strain CCMP1986 / NIES-2087 / MED4), this protein is Chaperone protein dnaK2 (dnaK2).